We begin with the raw amino-acid sequence, 224 residues long: Octanoyltransferase (224 aa).

Positions 29–224 constitute a BPL/LPL catalytic domain; sequence PGTPDELWLC…GDRLESYLSP (196 aa). Residues 68-75, 157-159, and 170-172 each bind substrate; these read RGGQVTYH, ALG, and GLA. Cysteine 188 serves as the catalytic Acyl-thioester intermediate.

The protein belongs to the LipB family.

It localises to the cytoplasm. The catalysed reaction is octanoyl-[ACP] + L-lysyl-[protein] = N(6)-octanoyl-L-lysyl-[protein] + holo-[ACP] + H(+). Its pathway is protein modification; protein lipoylation via endogenous pathway; protein N(6)-(lipoyl)lysine from octanoyl-[acyl-carrier-protein]: step 1/2. In terms of biological role, catalyzes the transfer of endogenously produced octanoic acid from octanoyl-acyl-carrier-protein onto the lipoyl domains of lipoate-dependent enzymes. Lipoyl-ACP can also act as a substrate although octanoyl-ACP is likely to be the physiological substrate. The protein is Octanoyltransferase of Methylibium petroleiphilum (strain ATCC BAA-1232 / LMG 22953 / PM1).